The primary structure comprises 84 residues: Cell division topological specificity factor (84 aa).

This sequence belongs to the MinE family.

Functionally, prevents the cell division inhibition by proteins MinC and MinD at internal division sites while permitting inhibition at polar sites. This ensures cell division at the proper site by restricting the formation of a division septum at the midpoint of the long axis of the cell. The chain is Cell division topological specificity factor from Burkholderia mallei (strain NCTC 10247).